Here is a 266-residue protein sequence, read N- to C-terminus: Exosome complex component Rrp42 (266 aa).

The protein belongs to the RNase PH family. Rrp42 subfamily. Component of the archaeal exosome complex. Forms a hexameric ring-like arrangement composed of 3 Rrp41-Rrp42 heterodimers. The hexameric ring associates with a trimer of Rrp4 and/or Csl4 subunits.

It localises to the cytoplasm. Non-catalytic component of the exosome, which is a complex involved in RNA degradation. Contributes to the structuring of the Rrp41 active site. In Methanosarcina mazei (strain ATCC BAA-159 / DSM 3647 / Goe1 / Go1 / JCM 11833 / OCM 88) (Methanosarcina frisia), this protein is Exosome complex component Rrp42.